Here is a 233-residue protein sequence, read N- to C-terminus: Large ribosomal subunit protein uL1 (233 aa).

Belongs to the universal ribosomal protein uL1 family. Part of the 50S ribosomal subunit.

Functionally, binds directly to 23S rRNA. The L1 stalk is quite mobile in the ribosome, and is involved in E site tRNA release. In terms of biological role, protein L1 is also a translational repressor protein, it controls the translation of the L11 operon by binding to its mRNA. The protein is Large ribosomal subunit protein uL1 of Rhizobium etli (strain ATCC 51251 / DSM 11541 / JCM 21823 / NBRC 15573 / CFN 42).